Consider the following 465-residue polypeptide: Branched-chain amino acid permease BcaP (465 aa).

13 consecutive transmembrane segments (helical) span residues 35–55, 57–77, 103–123, 133–153, 159–179, 188–208, 216–236, 258–278, 305–325, 355–375, 380–400, 413–432, and 437–456; these read LLGI…TGAV, AGPG…FAAL, LMAF…VSAV, SFLS…PGAV, LFNL…YLGI, IMVI…AVYV, FMPM…FAFI, GIIF…AIMT, VAGI…LVML, PYVA…LVPL, KLVN…VIVL, CPGV…FLIL, and VTIV…YFLY.

Belongs to the amino acid-polyamine-organocation (APC) superfamily.

It localises to the cell membrane. Its activity is regulated as follows. Isoleucine uptake is efficiently reduced in the presence of 100-fold excess valine, leucine, alanine, threonine, serine, cysteine, asparagine, and a nonproteinaceous amino acid 4-azaleucine. Its function is as follows. Branched-chain amino acid transport system which is involved in the uptake of isoleucine, valine and probably leucine. Can also transport threonine, and is active as a minor serine permease. May be an amino acid permease of rather broad specificity, because several amino acids, albeit at 100-fold excess, are able to prevent isoleucine uptake. Probably does not transport methionine. Together with BraB and BrnQ, plays an important role in the activation of CodY, a branched-chain amino acid-responsive transcriptional regulator that controls the expression of several dozen transcription units in B.subtilis. The protein is Branched-chain amino acid permease BcaP of Bacillus subtilis (strain 168).